The sequence spans 219 residues: Small ribosomal subunit protein uS3c (219 aa).

In terms of domain architecture, KH type-2 spans 39-111 (IRKFLMEKIK…NSFFNVKINF (73 aa)).

The protein belongs to the universal ribosomal protein uS3 family. As to quaternary structure, part of the 30S ribosomal subunit.

The protein localises to the plastid. The chain is Small ribosomal subunit protein uS3c (rps3) from Euglena longa (Euglenophycean alga).